The chain runs to 743 residues: DNA ligase 2 (743 aa).

Residues 45 to 49 (DADFD), 94 to 95 (SL), and Glu125 each bind NAD(+). Lys127 (N6-AMP-lysine intermediate) is an active-site residue. NAD(+) is bound by residues Arg148, Glu185, Lys301, and Lys325. 4 residues coordinate Zn(2+): Cys419, Cys422, Cys438, and Cys444. Residues 639 to 728 (EGPRPLEGLT…PERAKEAALP (90 aa)) enclose the BRCT domain. A disordered region spans residues 720 to 743 (ERAKEAALPVPEAAPAADPENSGE). Low complexity predominate over residues 725–743 (AALPVPEAAPAADPENSGE).

This sequence belongs to the NAD-dependent DNA ligase family. LigA subfamily. Mg(2+) serves as cofactor. The cofactor is Mn(2+).

The enzyme catalyses NAD(+) + (deoxyribonucleotide)n-3'-hydroxyl + 5'-phospho-(deoxyribonucleotide)m = (deoxyribonucleotide)n+m + AMP + beta-nicotinamide D-nucleotide.. In terms of biological role, DNA ligase that catalyzes the formation of phosphodiester linkages between 5'-phosphoryl and 3'-hydroxyl groups in double-stranded DNA using NAD as a coenzyme and as the energy source for the reaction. It is essential for DNA replication and repair of damaged DNA. This Streptomyces griseus subsp. griseus (strain JCM 4626 / CBS 651.72 / NBRC 13350 / KCC S-0626 / ISP 5235) protein is DNA ligase 2.